Here is a 255-residue protein sequence, read N- to C-terminus: ATP synthase subunit a (255 aa).

Residues 1-7 (MMFNNII) constitute a propeptide, removed in mature form. 6 helical membrane-spanning segments follow: residues 35-55 (FGFYIIISTIIILTLHLLITY), 91-111 (YFPFIYGLFIFILMNNLLGLI), 120-140 (HFILTFFISFTVVLGATILGF), 147-167 (FFSLFVPSGCPLGLLPLLVLI), 177-197 (VSLGLRLSANILSGHMLLVIL), and 208-228 (GIFYFLIGLIPLAFIFAFSGL).

The protein belongs to the ATPase A chain family. In terms of assembly, F-type ATPases have 2 components, CF(1) - the catalytic core - and CF(0) - the membrane proton channel. CF(1) has five subunits: alpha(3), beta(3), gamma(1), delta(1), epsilon(1). CF(0) has three main subunits: a, b and c.

It localises to the mitochondrion inner membrane. Its function is as follows. Mitochondrial membrane ATP synthase (F(1)F(0) ATP synthase or Complex V) produces ATP from ADP in the presence of a proton gradient across the membrane which is generated by electron transport complexes of the respiratory chain. F-type ATPases consist of two structural domains, F(1) - containing the extramembraneous catalytic core and F(0) - containing the membrane proton channel, linked together by a central stalk and a peripheral stalk. During catalysis, ATP synthesis in the catalytic domain of F(1) is coupled via a rotary mechanism of the central stalk subunits to proton translocation. Key component of the proton channel; it may play a direct role in the translocation of protons across the membrane. This is ATP synthase subunit a (ATP6) from Trichophyton rubrum (Athlete's foot fungus).